Consider the following 488-residue polypeptide: Cobyric acid synthase (488 aa).

A GATase cobBQ-type domain is found at 252–442; that stretch reads RTRICVPILP…VHGLFASDAF (191 aa). The Nucleophile role is filled by C334. The active site involves H434.

The protein belongs to the CobB/CobQ family. CobQ subfamily.

It participates in cofactor biosynthesis; adenosylcobalamin biosynthesis. Functionally, catalyzes amidations at positions B, D, E, and G on adenosylcobyrinic A,C-diamide. NH(2) groups are provided by glutamine, and one molecule of ATP is hydrogenolyzed for each amidation. The sequence is that of Cobyric acid synthase from Xanthobacter autotrophicus (strain ATCC BAA-1158 / Py2).